The following is a 104-amino-acid chain: Large ribosomal subunit protein uL24 (104 aa).

The protein belongs to the universal ribosomal protein uL24 family. As to quaternary structure, part of the 50S ribosomal subunit.

In terms of biological role, one of two assembly initiator proteins, it binds directly to the 5'-end of the 23S rRNA, where it nucleates assembly of the 50S subunit. Its function is as follows. One of the proteins that surrounds the polypeptide exit tunnel on the outside of the subunit. This is Large ribosomal subunit protein uL24 from Shewanella loihica (strain ATCC BAA-1088 / PV-4).